A 534-amino-acid polypeptide reads, in one-letter code: CTP synthase (534 aa).

Residues 1-268 (MAAKYIFVTG…DQIVCDHLQL (268 aa)) form an amidoligase domain region. A CTP-binding site is contributed by Ser-14. Residue Ser-14 participates in UTP binding. 15–20 (SLGKGI) contacts ATP. Tyr-55 provides a ligand contact to L-glutamine. Asp-72 serves as a coordination point for ATP. Residues Asp-72 and Glu-142 each coordinate Mg(2+). Residues 149 to 151 (DIE), 189 to 194 (KSKPTQ), and Lys-225 each bind CTP. Residues 189–194 (KSKPTQ) and Lys-225 each bind UTP. The Glutamine amidotransferase type-1 domain maps to 293–534 (RIAIVGKYVE…FVRNALAAQA (242 aa)). Gly-355 provides a ligand contact to L-glutamine. The active-site Nucleophile; for glutamine hydrolysis is the Cys-382. Residues 383-386 (LGMQ), Glu-406, and Arg-463 each bind L-glutamine. Catalysis depends on residues His-508 and Glu-510.

Belongs to the CTP synthase family. Homotetramer.

The enzyme catalyses UTP + L-glutamine + ATP + H2O = CTP + L-glutamate + ADP + phosphate + 2 H(+). The catalysed reaction is L-glutamine + H2O = L-glutamate + NH4(+). It carries out the reaction UTP + NH4(+) + ATP = CTP + ADP + phosphate + 2 H(+). It functions in the pathway pyrimidine metabolism; CTP biosynthesis via de novo pathway; CTP from UDP: step 2/2. Allosterically activated by GTP, when glutamine is the substrate; GTP has no effect on the reaction when ammonia is the substrate. The allosteric effector GTP functions by stabilizing the protein conformation that binds the tetrahedral intermediate(s) formed during glutamine hydrolysis. Inhibited by the product CTP, via allosteric rather than competitive inhibition. In terms of biological role, catalyzes the ATP-dependent amination of UTP to CTP with either L-glutamine or ammonia as the source of nitrogen. Regulates intracellular CTP levels through interactions with the four ribonucleotide triphosphates. This chain is CTP synthase, found in Shouchella clausii (strain KSM-K16) (Alkalihalobacillus clausii).